A 356-amino-acid polypeptide reads, in one-letter code: Phospho-N-acetylmuramoyl-pentapeptide-transferase (356 aa).

Helical transmembrane passes span 25–45, 70–90, 93–113, 138–158, 164–184, 195–215, 235–255, 258–278, 284–304, and 333–353; these read TIAA…SIIA, GTPT…AFLW, LSNI…AIGF, FFVA…GFAL, YLIH…VATG, GLAI…AYLC, LAVL…FNAP, AIFM…TVAV, IVLV…VIQV, and QVVI…LSTL.

The protein belongs to the glycosyltransferase 4 family. MraY subfamily. It depends on Mg(2+) as a cofactor.

It localises to the cell inner membrane. The catalysed reaction is UDP-N-acetyl-alpha-D-muramoyl-L-alanyl-gamma-D-glutamyl-meso-2,6-diaminopimeloyl-D-alanyl-D-alanine + di-trans,octa-cis-undecaprenyl phosphate = di-trans,octa-cis-undecaprenyl diphospho-N-acetyl-alpha-D-muramoyl-L-alanyl-D-glutamyl-meso-2,6-diaminopimeloyl-D-alanyl-D-alanine + UMP. The protein operates within cell wall biogenesis; peptidoglycan biosynthesis. Catalyzes the initial step of the lipid cycle reactions in the biosynthesis of the cell wall peptidoglycan: transfers peptidoglycan precursor phospho-MurNAc-pentapeptide from UDP-MurNAc-pentapeptide onto the lipid carrier undecaprenyl phosphate, yielding undecaprenyl-pyrophosphoryl-MurNAc-pentapeptide, known as lipid I. In Bartonella tribocorum (strain CIP 105476 / IBS 506), this protein is Phospho-N-acetylmuramoyl-pentapeptide-transferase.